A 151-amino-acid polypeptide reads, in one-letter code: Large ribosomal subunit protein uL15 (151 aa).

The tract at residues 1 to 45 (MNLSSLKPVKGSTKTCKRVGRGQGSGCGGTSTRGHKGQKSRSGYS) is disordered. Residues 21–31 (RGQGSGCGGTS) are compositionally biased toward gly residues.

Belongs to the universal ribosomal protein uL15 family. As to quaternary structure, part of the 50S ribosomal subunit.

In terms of biological role, binds to the 23S rRNA. In Azobacteroides pseudotrichonymphae genomovar. CFP2, this protein is Large ribosomal subunit protein uL15.